Consider the following 112-residue polypeptide: T cell receptor alpha variable 41 (112 aa).

Residues 1 to 21 form the signal peptide; the sequence is MVKIRQFLLAILWLQLSCVSA. Residues 24–112 enclose the Ig-like domain; sequence NEVEQSPQNL…DSAVYICAVR (89 aa). Asn32 and Asn44 each carry an N-linked (GlcNAc...) asparagine glycan. Cys45 and Cys109 are disulfide-bonded.

Alpha-beta TR is a heterodimer composed of an alpha and beta chain; disulfide-linked. The alpha-beta TR is associated with the transmembrane signaling CD3 coreceptor proteins to form the TR-CD3 (TcR or TCR). The assembly of alpha-beta TR heterodimers with CD3 occurs in the endoplasmic reticulum where a single alpha-beta TR heterodimer associates with one CD3D-CD3E heterodimer, one CD3G-CD3E heterodimer and one CD247 homodimer forming a stable octameric structure. CD3D-CD3E and CD3G-CD3E heterodimers preferentially associate with TR alpha and TR beta chains, respectively. The association of the CD247 homodimer is the last step of TcR assembly in the endoplasmic reticulum and is required for transport to the cell surface.

Its subcellular location is the cell membrane. In terms of biological role, v region of the variable domain of T cell receptor (TR) alpha chain that participates in the antigen recognition. Alpha-beta T cell receptors are antigen specific receptors which are essential to the immune response and are present on the cell surface of T lymphocytes. Recognize peptide-major histocompatibility (MH) (pMH) complexes that are displayed by antigen presenting cells (APC), a prerequisite for efficient T cell adaptive immunity against pathogens. Binding of alpha-beta TR to pMH complex initiates TR-CD3 clustering on the cell surface and intracellular activation of LCK that phosphorylates the ITAM motifs of CD3G, CD3D, CD3E and CD247 enabling the recruitment of ZAP70. In turn ZAP70 phosphorylates LAT, which recruits numerous signaling molecules to form the LAT signalosome. The LAT signalosome propagates signal branching to three major signaling pathways, the calcium, the mitogen-activated protein kinase (MAPK) kinase and the nuclear factor NF-kappa-B (NF-kB) pathways, leading to the mobilization of transcription factors that are critical for gene expression and essential for T cell growth and differentiation. The T cell repertoire is generated in the thymus, by V-(D)-J rearrangement. This repertoire is then shaped by intrathymic selection events to generate a peripheral T cell pool of self-MH restricted, non-autoaggressive T cells. Post-thymic interaction of alpha-beta TR with the pMH complexes shapes TR structural and functional avidity. The polypeptide is T cell receptor alpha variable 41 (Homo sapiens (Human)).